The sequence spans 567 residues: 2-succinyl-5-enolpyruvyl-6-hydroxy-3-cyclohexene-1-carboxylate synthase (567 aa).

Belongs to the TPP enzyme family. MenD subfamily. Homodimer. Mg(2+) is required as a cofactor. Mn(2+) serves as cofactor. It depends on thiamine diphosphate as a cofactor.

It catalyses the reaction isochorismate + 2-oxoglutarate + H(+) = 5-enolpyruvoyl-6-hydroxy-2-succinyl-cyclohex-3-ene-1-carboxylate + CO2. It functions in the pathway quinol/quinone metabolism; 1,4-dihydroxy-2-naphthoate biosynthesis; 1,4-dihydroxy-2-naphthoate from chorismate: step 2/7. Its pathway is quinol/quinone metabolism; menaquinone biosynthesis. In terms of biological role, catalyzes the thiamine diphosphate-dependent decarboxylation of 2-oxoglutarate and the subsequent addition of the resulting succinic semialdehyde-thiamine pyrophosphate anion to isochorismate to yield 2-succinyl-5-enolpyruvyl-6-hydroxy-3-cyclohexene-1-carboxylate (SEPHCHC). In Shewanella loihica (strain ATCC BAA-1088 / PV-4), this protein is 2-succinyl-5-enolpyruvyl-6-hydroxy-3-cyclohexene-1-carboxylate synthase.